The sequence spans 587 residues: ATP-dependent RNA helicase HAS1 (587 aa).

Over residues 1-11 the composition is skewed to basic residues; the sequence is MDDRSSKKRKL. The disordered stretch occupies residues 1-103; the sequence is MDDRSSKKRK…DGDIPGDLTL (103 aa). Residues 42–54 show a composition bias toward basic and acidic residues; sequence VEPKVEKGSKKEE. The span at 55–69 shows a compositional bias: acidic residues; sequence EENDWSDEEENEAAD. Residues 112–140 carry the Q motif motif; that stretch reads QAFSELNLSENTMKAIEEMGFTKMTEIQR. The 175-residue stretch at 143–317 folds into the Helicase ATP-binding domain; that stretch reads IPPLLAGKDV…RVSLRPGPLY (175 aa). Residue 156–163 coordinates ATP; it reads AKTGSGKT. A DEAD box motif is present at residues 265 to 268; that stretch reads DEAD. One can recognise a Helicase C-terminal domain in the interval 331 to 501; it reads GLEQGYVVCE…NVQSQLEKLI (171 aa). Residues 558 to 587 form a disordered region; sequence GASMSKDKKAGGRRAYGSQPRQGGTYGKRR.

This sequence belongs to the DEAD box helicase family. DDX18/HAS1 subfamily. Associates in the nucleolus with the 60S and pre-60S ribosomal subunits.

It is found in the nucleus. The protein localises to the nucleolus. The catalysed reaction is ATP + H2O = ADP + phosphate + H(+). Its function is as follows. ATP-dependent RNA helicase involved in 40S ribosomal subunit biogenesis. Required for the processing and cleavage of 35S pre-rRNA at sites A0, A1, and A2, leading to mature 18S rRNA. The chain is ATP-dependent RNA helicase HAS1 (HAS1) from Pyricularia oryzae (strain 70-15 / ATCC MYA-4617 / FGSC 8958) (Rice blast fungus).